The sequence spans 323 residues: MKSFISLLGLSFLTCHASAHYIFQSFTYKNIQYPPYGYIRVNDNYNSPVIDLASNDLRCNSGGETSKGTQTITVKAGDSFSFTGDIQVYHQGPLSIYMAKAPTTAAAFDGSGQVWFKILDIGPTFTNQVATWNLYQTYTYTIPPNLPNGDYLLRIQQLAIHNPYPGGIPQFYIECAQITVTNGGSGTPGPLVSIPGAFSDTDPGYTANIYSNFFNYTVPGPAVWASQGGSSAYTGISNGNNAATTLASMPAATGAATTATTIVTTTAAGSGSATKTGTSATATATGAVVQKFGQCGGQGWTGGTTCVAGSTCTATNAYYSQCL.

A signal peptide spans 1-19; it reads MKSFISLLGLSFLTCHASA. Cu(2+) contacts are provided by histidine 20 and histidine 90. A disulfide bridge connects residues cysteine 59 and cysteine 175. Histidine 161 and glutamine 170 together coordinate O2. Tyrosine 172 contributes to the Cu(2+) binding site. Asparagine 215 is a glycosylation site (N-linked (GlcNAc...) asparagine). One can recognise a CBM1 domain in the interval 287-323; it reads AVVQKFGQCGGQGWTGGTTCVAGSTCTATNAYYSQCL.

The protein belongs to the polysaccharide monooxygenase AA9 family. Cu(2+) is required as a cofactor.

It localises to the secreted. The catalysed reaction is [(1-&gt;4)-beta-D-glucosyl]n+m + reduced acceptor + O2 = 4-dehydro-beta-D-glucosyl-[(1-&gt;4)-beta-D-glucosyl]n-1 + [(1-&gt;4)-beta-D-glucosyl]m + acceptor + H2O.. Lytic polysaccharide monooxygenase (LPMO) that depolymerizes crystalline and amorphous polysaccharides via the oxidation of scissile alpha- or beta-(1-4)-glycosidic bonds, yielding C1 and C4 oxidation products. Catalysis by LPMOs requires the reduction of the active-site copper from Cu(II) to Cu(I) by a reducing agent and H(2)O(2) or O(2) as a cosubstrate. The polypeptide is AA9 family lytic polysaccharide monooxygenase A (Botryotinia fuckeliana (strain B05.10) (Noble rot fungus)).